A 619-amino-acid polypeptide reads, in one-letter code: Dihydroxy-acid dehydratase (619 aa).

A Mg(2+)-binding site is contributed by D81. C122 lines the [2Fe-2S] cluster pocket. Mg(2+)-binding residues include D123 and K124. Position 124 is an N6-carboxylysine (K124). C195 serves as a coordination point for [2Fe-2S] cluster. A Mg(2+)-binding site is contributed by E494. S520 acts as the Proton acceptor in catalysis.

Belongs to the IlvD/Edd family. As to quaternary structure, homodimer. It depends on [2Fe-2S] cluster as a cofactor. Mg(2+) serves as cofactor.

It catalyses the reaction (2R)-2,3-dihydroxy-3-methylbutanoate = 3-methyl-2-oxobutanoate + H2O. It carries out the reaction (2R,3R)-2,3-dihydroxy-3-methylpentanoate = (S)-3-methyl-2-oxopentanoate + H2O. The protein operates within amino-acid biosynthesis; L-isoleucine biosynthesis; L-isoleucine from 2-oxobutanoate: step 3/4. It participates in amino-acid biosynthesis; L-valine biosynthesis; L-valine from pyruvate: step 3/4. Functionally, functions in the biosynthesis of branched-chain amino acids. Catalyzes the dehydration of (2R,3R)-2,3-dihydroxy-3-methylpentanoate (2,3-dihydroxy-3-methylvalerate) into 2-oxo-3-methylpentanoate (2-oxo-3-methylvalerate) and of (2R)-2,3-dihydroxy-3-methylbutanoate (2,3-dihydroxyisovalerate) into 2-oxo-3-methylbutanoate (2-oxoisovalerate), the penultimate precursor to L-isoleucine and L-valine, respectively. The chain is Dihydroxy-acid dehydratase from Shewanella sp. (strain ANA-3).